A 70-amino-acid chain; its full sequence is Large ribosomal subunit protein bL31 (70 aa).

Zn(2+)-binding residues include Cys16, Cys18, Cys37, and Cys40.

It belongs to the bacterial ribosomal protein bL31 family. Type A subfamily. As to quaternary structure, part of the 50S ribosomal subunit. It depends on Zn(2+) as a cofactor.

Functionally, binds the 23S rRNA. This chain is Large ribosomal subunit protein bL31, found in Alteromonas mediterranea (strain DSM 17117 / CIP 110805 / LMG 28347 / Deep ecotype).